A 310-amino-acid chain; its full sequence is Proline dehydrogenase (310 aa).

Position 98 (Lys-98) interacts with substrate. The active site involves Asp-135. FAD is bound by residues Met-136, Gln-166, Arg-187–Ala-192, Thr-229–His-230, and Arg-292–Glu-295. Arg-187 is a catalytic residue. A substrate-binding site is contributed by Arg-291–Arg-292.

This sequence belongs to the proline dehydrogenase family. It depends on FAD as a cofactor.

The catalysed reaction is L-proline + a quinone = (S)-1-pyrroline-5-carboxylate + a quinol + H(+). It participates in amino-acid degradation; L-proline degradation into L-glutamate; L-glutamate from L-proline: step 1/2. Its function is as follows. Converts proline to delta-1-pyrroline-5-carboxylate. This is Proline dehydrogenase from Deinococcus radiodurans (strain ATCC 13939 / DSM 20539 / JCM 16871 / CCUG 27074 / LMG 4051 / NBRC 15346 / NCIMB 9279 / VKM B-1422 / R1).